A 411-amino-acid polypeptide reads, in one-letter code: 2-oxoglutarate-dependent dioxygenase AOP3 (411 aa).

Residues 259–356 (GNASVGAKEA…RYAAALFSNP (98 aa)) enclose the Fe2OG dioxygenase domain. Fe cation is bound by residues His-279, Asp-281, and His-336. Residue Arg-347 coordinates 2-oxoglutarate.

The protein belongs to the iron/ascorbate-dependent oxidoreductase family. Fe(2+) is required as a cofactor. In terms of tissue distribution, not expressed.

Its function is as follows. 2-oxoglutarate-dependent dioxygenase involved in glucosinolates biosynthesis. Catalyzes the conversion of methylsulfinylalkyl glucosinolates to hydroxyalkyl glucosinolates. The chain is 2-oxoglutarate-dependent dioxygenase AOP3 (AOP3) from Arabidopsis thaliana (Mouse-ear cress).